Reading from the N-terminus, the 355-residue chain is IgG receptor FcRn large subunit p51 (355 aa).

The N-terminal stretch at 1–24 (MRVPRSQPWGLALLLLLLPGTLRA) is a signal peptide. The tract at residues 25 to 111 (AESHRSLLYH…ALKVFGDRDS (87 aa)) is alpha-1. At 25 to 300 (AESHRSLLYH…LESPAKSSVP (276 aa)) the chain is on the extracellular side. An alpha-2 region spans residues 112 to 201 (YTLQGLLGCE…ERGRGNLEWK (90 aa)). N126 carries an N-linked (GlcNAc...) asparagine glycan. An alpha-3 region spans residues 202–291 (EPPSMRLKAR…GPAQPLTVEL (90 aa)). The Ig-like C1-type domain maps to 203–292 (PPSMRLKARP…PAQPLTVELE (90 aa)). C222 and C276 form a disulfide bridge. The segment at 293 to 298 (SPAKSS) is connecting peptide. A helical membrane pass occupies residues 301–321 (VIGISIGFLLLMTVAAGGALL). At 322 to 355 (WRRRKGLPAPWIAFRGDDIGALLPTPGLSKDAES) the chain is on the cytoplasmic side.

It belongs to the immunoglobulin superfamily. As to quaternary structure, fcRn complex consists of two subunits: p51, and p14 which is equivalent to beta-2-microglobulin. It forms an MHC class I-like heterodimer. Interacts with albumin/ALB; this interaction regulates ALB homeostasis. As to expression, expressed in liver and mammary gland of non-lactating animals. Expressed in hepatocytes and in epithelial cells of portal bile ductuli. Not expressed in the brances of portal veins or hepatic arteries. Expressed in the epithelial cells of the acini and ducti in the mammary gland with expression emphasized at the apical side. Not expressed in blood vessels of mammary gland.

The protein resides in the cell membrane. It is found in the endosome membrane. In terms of biological role, cell surface receptor that transfers passive humoral immunity from the mother to the newborn. Binds to the Fc region of monomeric immunoglobulin gamma and mediates its selective uptake from milk. IgG in the milk is bound at the apical surface of the intestinal epithelium. The resultant FcRn-IgG complexes are transcytosed across the intestinal epithelium and IgG is released from FcRn into blood or tissue fluids. Throughout life, contributes to effective humoral immunity by recycling IgG and extending its half-life in the circulation. Mechanistically, monomeric IgG binding to FcRn in acidic endosomes of endothelial and hematopoietic cells recycles IgG to the cell surface where it is released into the circulation. In addition of IgG, regulates homeostasis of the other most abundant circulating protein albumin/ALB. The protein is IgG receptor FcRn large subunit p51 of Camelus dromedarius (Dromedary).